Here is a 193-residue protein sequence, read N- to C-terminus: Dual-action ribosomal maturation protein DarP (193 aa).

The protein belongs to the DarP family.

The protein localises to the cytoplasm. Functionally, member of a network of 50S ribosomal subunit biogenesis factors which assembles along the 30S-50S interface, preventing incorrect 23S rRNA structures from forming. Promotes peptidyl transferase center (PTC) maturation. In Vibrio cholerae serotype O1 (strain ATCC 39315 / El Tor Inaba N16961), this protein is Dual-action ribosomal maturation protein DarP.